We begin with the raw amino-acid sequence, 352 residues long: Nuclear receptor subfamily 1 group I member 3 (352 aa).

Positions 8–83 (LRNCVVCGDQ…AGMRKDMILS (76 aa)) form a DNA-binding region, nuclear receptor. The NR C4-type zinc finger occupies 11–31 (CVVCGDQATGYHFNALTCEGC). Threonine 38 is subject to Phosphothreonine; by PKC. An NR C4-type zinc finger spans residues 47–71 (CPFAGSCEVSKIQRRHCPACRLQKC). The NR LBD domain occupies 109–352 (EQEELIQTLL…MMPLLQEICS (244 aa)).

The protein belongs to the nuclear hormone receptor family. NR1 subfamily. In terms of assembly, heterodimer of NR1I3 and RXR. Interacts with PSMC4. Interacts with ECT2. Directly interacts with DNAJC7; this complex may also include HSP90. Interacts with CRY1. Interacts with CRY2 in a ligand-dependent manner. Phosphorylated at Thr-38 by PKC, dephosphorylation of Thr-38 is required for nuclear translocation and activation.

Its subcellular location is the nucleus. It is found in the cytoplasm. The protein localises to the cytoskeleton. Binds and transactivates the retinoic acid response elements that control expression of the retinoic acid receptor beta 2 and alcohol dehydrogenase 3 genes. Transactivates both the phenobarbital responsive element module of the human CYP2B6 gene and the CYP3A4 xenobiotic response element. The chain is Nuclear receptor subfamily 1 group I member 3 (NR1I3) from Macaca mulatta (Rhesus macaque).